A 596-amino-acid chain; its full sequence is PDZ and LIM domain protein 5 (596 aa).

Ser2 carries the post-translational modification N-acetylserine. Ser2 bears the Phosphoserine mark. The region spanning 2-85 is the PDZ domain; sequence SNYSVSLVGP…SLNMTLQRAS (84 aa). The residue at position 89 (Lys89) is an N6-acetyllysine; alternate. Lys89 is subject to N6-succinyllysine; alternate. Lys89 is covalently cross-linked (Glycyl lysine isopeptide (Lys-Gly) (interchain with G-Cter in SUMO2); alternate). Phosphoserine is present on residues Ser111, Ser134, and Ser137. 3 disordered regions span residues 121 to 165, 196 to 240, and 255 to 340; these read NNMA…SPSP, AGKT…GPPR, and THSD…RPGV. Residues 134–143 show a composition bias toward polar residues; sequence SVSSPKVTSI. The span at 144–165 shows a compositional bias: low complexity; that stretch reads PSPSSAFTPAHATTSSHASPSP. Composition is skewed to polar residues over residues 205–219 and 226–237; these read RQPT…TSQE and RGSQGDSKQQNG. Residues Ser228 and Ser260 each carry the phosphoserine modification. Basic and acidic residues-rich tracts occupy residues 258–273 and 293–304; these read DASK…DWRP and EHLKESEADNTK. Positions 305–335 are enriched in polar residues; that stretch reads KANNSQEPSPQLASSVASTRSMPESLDSPTS. Ser309, Ser313, and Ser322 each carry phosphoserine. At Lys350 the chain carries N6-acetyllysine. Residues 354–381 are disordered; the sequence is STGVIKSPSWQRPNQGVPSTGRISNSAT. Residues Ser360 and Ser362 each carry the phosphoserine modification. Residues 361-381 are compositionally biased toward polar residues; the sequence is PSWQRPNQGVPSTGRISNSAT. LIM zinc-binding domains follow at residues 418–477, 477–536, and 536–596; these read PMCA…FFAP, PECG…LFGT, and TICH…SVNF.

As to quaternary structure, interacts with various PKC isoforms through the LIM domains. Interacts with actin and alpha-actinin through the PDZ domain. Interacts (via LIM domains) with SIPA1L1/SPAR; this interaction may occur preferentially with isoform 1. As to expression, heart and skeletal muscle specific. Expression is commonly increased in the brain of patients with bipolar disorder, schizophrenia, and major depression.

The protein resides in the postsynaptic density. The protein localises to the presynapse. It is found in the postsynapse. It localises to the cytoplasm. Its subcellular location is the cytosol. Functionally, may play an important role in the heart development by scaffolding PKC to the Z-disk region. May play a role in the regulation of cardiomyocyte expansion. Isoforms lacking the LIM domains may negatively modulate the scaffolding activity of isoform 1. Overexpression promotes the development of heart hypertrophy. Contributes to the regulation of dendritic spine morphogenesis in neurons. May be required to restrain postsynaptic growth of excitatory synapses. Isoform 1, but not isoform 2, expression favors spine thinning and elongation. This Homo sapiens (Human) protein is PDZ and LIM domain protein 5.